Here is a 384-residue protein sequence, read N- to C-terminus: Methylthioribose-1-phosphate isomerase (384 aa).

Residue aspartate 255 is the Proton donor of the active site.

Belongs to the eIF-2B alpha/beta/delta subunits family. MtnA subfamily.

It is found in the cytoplasm. It localises to the nucleus. The enzyme catalyses 5-(methylsulfanyl)-alpha-D-ribose 1-phosphate = 5-(methylsulfanyl)-D-ribulose 1-phosphate. It participates in amino-acid biosynthesis; L-methionine biosynthesis via salvage pathway; L-methionine from S-methyl-5-thio-alpha-D-ribose 1-phosphate: step 1/6. Functionally, catalyzes the interconversion of methylthioribose-1-phosphate (MTR-1-P) into methylthioribulose-1-phosphate (MTRu-1-P). In Talaromyces stipitatus (strain ATCC 10500 / CBS 375.48 / QM 6759 / NRRL 1006) (Penicillium stipitatum), this protein is Methylthioribose-1-phosphate isomerase (mri1).